We begin with the raw amino-acid sequence, 310 residues long: Methionyl-tRNA formyltransferase (310 aa).

(6S)-5,6,7,8-tetrahydrofolate is bound at residue 110-113 (SLLP).

Belongs to the Fmt family.

It carries out the reaction L-methionyl-tRNA(fMet) + (6R)-10-formyltetrahydrofolate = N-formyl-L-methionyl-tRNA(fMet) + (6S)-5,6,7,8-tetrahydrofolate + H(+). Functionally, attaches a formyl group to the free amino group of methionyl-tRNA(fMet). The formyl group appears to play a dual role in the initiator identity of N-formylmethionyl-tRNA by promoting its recognition by IF2 and preventing the misappropriation of this tRNA by the elongation apparatus. The sequence is that of Methionyl-tRNA formyltransferase from Halorhodospira halophila (strain DSM 244 / SL1) (Ectothiorhodospira halophila (strain DSM 244 / SL1)).